A 204-amino-acid chain; its full sequence is uncharacterized protein (204 aa).

The N-terminal stretch at 1–24 (MPINTFCKISLFICALFCSTVTLA) is a signal peptide.

This is an uncharacterized protein from Pasteurella multocida (strain Pm70).